The following is a 301-amino-acid chain: tRNA pseudouridine synthase B (301 aa).

Catalysis depends on Asp38, which acts as the Nucleophile.

This sequence belongs to the pseudouridine synthase TruB family. Type 1 subfamily.

It carries out the reaction uridine(55) in tRNA = pseudouridine(55) in tRNA. Functionally, responsible for synthesis of pseudouridine from uracil-55 in the psi GC loop of transfer RNAs. This chain is tRNA pseudouridine synthase B, found in Ehrlichia canis (strain Jake).